Consider the following 198-residue polypeptide: Ribosome maturation factor RimM (198 aa).

Residues 92-168 (DDEYYHADLI…IELPAEIEGE (77 aa)) form the PRC barrel domain. Positions 163 to 172 (AEIEGEDQDS) are enriched in acidic residues. Residues 163 to 198 (AEIEGEDQDSSDNAGSPEGDAAASNSARHPRESGDP) are disordered.

This sequence belongs to the RimM family. Binds ribosomal protein uS19.

Its subcellular location is the cytoplasm. In terms of biological role, an accessory protein needed during the final step in the assembly of 30S ribosomal subunit, possibly for assembly of the head region. Essential for efficient processing of 16S rRNA. May be needed both before and after RbfA during the maturation of 16S rRNA. It has affinity for free ribosomal 30S subunits but not for 70S ribosomes. The protein is Ribosome maturation factor RimM of Bradyrhizobium sp. (strain BTAi1 / ATCC BAA-1182).